Reading from the N-terminus, the 137-residue chain is S-adenosylmethionine decarboxylase proenzyme (137 aa).

The active-site Schiff-base intermediate with substrate; via pyruvic acid is the Ser63. Residue Ser63 is modified to Pyruvic acid (Ser); by autocatalysis. Catalysis depends on His68, which acts as the Proton acceptor; for processing activity. The Proton donor; for catalytic activity role is filled by Cys83.

It belongs to the prokaryotic AdoMetDC family. Type 1 subfamily. In terms of assembly, heterotetramer of two alpha and two beta chains arranged as a dimer of alpha/beta heterodimers. It depends on pyruvate as a cofactor. Is synthesized initially as an inactive proenzyme. Formation of the active enzyme involves a self-maturation process in which the active site pyruvoyl group is generated from an internal serine residue via an autocatalytic post-translational modification. Two non-identical subunits are generated from the proenzyme in this reaction, and the pyruvate is formed at the N-terminus of the alpha chain, which is derived from the carboxyl end of the proenzyme. The post-translation cleavage follows an unusual pathway, termed non-hydrolytic serinolysis, in which the side chain hydroxyl group of the serine supplies its oxygen atom to form the C-terminus of the beta chain, while the remainder of the serine residue undergoes an oxidative deamination to produce ammonia and the pyruvoyl group blocking the N-terminus of the alpha chain.

It carries out the reaction S-adenosyl-L-methionine + H(+) = S-adenosyl 3-(methylsulfanyl)propylamine + CO2. Its pathway is amine and polyamine biosynthesis; S-adenosylmethioninamine biosynthesis; S-adenosylmethioninamine from S-adenosyl-L-methionine: step 1/1. Functionally, catalyzes the decarboxylation of S-adenosylmethionine to S-adenosylmethioninamine (dcAdoMet), the propylamine donor required for the synthesis of the polyamines spermine and spermidine from the diamine putrescine. This chain is S-adenosylmethionine decarboxylase proenzyme, found in Fervidobacterium nodosum (strain ATCC 35602 / DSM 5306 / Rt17-B1).